The chain runs to 129 residues: Small ribosomal subunit protein uS11 (129 aa).

Belongs to the universal ribosomal protein uS11 family. As to quaternary structure, part of the 30S ribosomal subunit. Interacts with proteins S7 and S18. Binds to IF-3.

Its function is as follows. Located on the platform of the 30S subunit, it bridges several disparate RNA helices of the 16S rRNA. Forms part of the Shine-Dalgarno cleft in the 70S ribosome. The polypeptide is Small ribosomal subunit protein uS11 (Bacillus mycoides (strain KBAB4) (Bacillus weihenstephanensis)).